A 347-amino-acid chain; its full sequence is D-alanine--D-alanine ligase (347 aa).

The region spanning 134-332 (KLYAKDLGVK…LAQSLPKTPK (199 aa)) is the ATP-grasp domain. 161–216 (LIGFNFPFIIKPSNAGSSLGVSVVKEEKELIYALDGAFEYSKEILIEPFIQGVKEY) serves as a coordination point for ATP. Residues D288, E300, and N302 each coordinate Mg(2+).

Belongs to the D-alanine--D-alanine ligase family. Mg(2+) serves as cofactor. It depends on Mn(2+) as a cofactor.

It is found in the cytoplasm. The catalysed reaction is 2 D-alanine + ATP = D-alanyl-D-alanine + ADP + phosphate + H(+). It participates in cell wall biogenesis; peptidoglycan biosynthesis. Its function is as follows. Cell wall formation. This Helicobacter pylori (strain Shi470) protein is D-alanine--D-alanine ligase.